The sequence spans 270 residues: Tryptophan synthase alpha chain (270 aa).

Catalysis depends on proton acceptor residues Glu-50 and Asp-61.

The protein belongs to the TrpA family. In terms of assembly, tetramer of two alpha and two beta chains.

It catalyses the reaction (1S,2R)-1-C-(indol-3-yl)glycerol 3-phosphate + L-serine = D-glyceraldehyde 3-phosphate + L-tryptophan + H2O. Its pathway is amino-acid biosynthesis; L-tryptophan biosynthesis; L-tryptophan from chorismate: step 5/5. Functionally, the alpha subunit is responsible for the aldol cleavage of indoleglycerol phosphate to indole and glyceraldehyde 3-phosphate. This is Tryptophan synthase alpha chain from Chlorobium luteolum (strain DSM 273 / BCRC 81028 / 2530) (Pelodictyon luteolum).